The sequence spans 148 residues: Putative cyclin-dependent kinase inhibitor SPL2 (148 aa).

A phosphoserine mark is found at S59 and S86.

The protein resides in the cytoplasmic granule. It is found in the cytoplasm. Its function is as follows. Putative cyclin-dependent kinase (CDK) inhibitor necessary and sufficient for PHO pathway-dependent down-regulation of low-affinity phosphate transport. The chain is Putative cyclin-dependent kinase inhibitor SPL2 (SPL2) from Saccharomyces cerevisiae (strain ATCC 204508 / S288c) (Baker's yeast).